Consider the following 383-residue polypeptide: MSSPERALLNLLTDIALSFDGAILGLTLAVSAVGSALKYASTNAALKKIKDAPEVSISDLRSLLPASEDKSETNDNRKSNDQRIVVVRGVVKPKISGDEGYKNNNVLISPETGDKALIIQRTQTYVYSGWKRLFQSTGHRFMLERSLRKHGADFTRTVPFVIVGKDQQSNSSFVAVNMDGSRQPLPLTTVYNRLQPINSSFLQAFLYPDYPVGLLDIEKILPPGKDITAVGIYSFNNGVPEIKSCQDLPYFLSEMTKDKMIEDLMEQTNFIFLGSVILGIVSVGILSYAAVRTWNKWKQWNHQRELPQRPNDSVVDDEPEDADEIPDGELCVICVSRRRVPAFIPCGHVVCCRRCASTVERELNPKCPVCLQSIRGSMRVYYS.

The Cytoplasmic segment spans residues 1 to 14; it reads MSSPERALLNLLTD. Residues 15–35 traverse the membrane as a helical segment; sequence IALSFDGAILGLTLAVSAVGS. The Chloroplast intermembrane segment spans residues 36 to 269; that stretch reads ALKYASTNAA…MIEDLMEQTN (234 aa). Residues 270-290 form a helical membrane-spanning segment; it reads FIFLGSVILGIVSVGILSYAA. The Cytoplasmic segment spans residues 291–383; it reads VRTWNKWKQW…IRGSMRVYYS (93 aa). The RING-type zinc finger occupies 331-370; the sequence is CVICVSRRRVPAFIPCGHVVCCRRCASTVERELNPKCPVC.

It localises to the plastid. Its subcellular location is the chloroplast outer membrane. It carries out the reaction S-ubiquitinyl-[E2 ubiquitin-conjugating enzyme]-L-cysteine + [acceptor protein]-L-lysine = [E2 ubiquitin-conjugating enzyme]-L-cysteine + N(6)-ubiquitinyl-[acceptor protein]-L-lysine.. The protein operates within protein modification; protein ubiquitination. Functionally, possesses E3 ubiquitin-protein ligase activity. This Arabidopsis thaliana (Mouse-ear cress) protein is E3 ubiquitin-protein ligase SPL2.